Reading from the N-terminus, the 428-residue chain is 3-phosphoshikimate 1-carboxyvinyltransferase (428 aa).

3-phosphoshikimate is bound by residues lysine 21, serine 22, and arginine 26. Residue lysine 21 coordinates phosphoenolpyruvate. Phosphoenolpyruvate is bound by residues glycine 91 and arginine 119. 3-phosphoshikimate is bound by residues serine 164, glutamine 166, aspartate 313, and lysine 340. Glutamine 166 serves as a coordination point for phosphoenolpyruvate. The active-site Proton acceptor is aspartate 313. Arginine 344 and arginine 386 together coordinate phosphoenolpyruvate.

The protein belongs to the EPSP synthase family. In terms of assembly, monomer.

Its subcellular location is the cytoplasm. It catalyses the reaction 3-phosphoshikimate + phosphoenolpyruvate = 5-O-(1-carboxyvinyl)-3-phosphoshikimate + phosphate. The protein operates within metabolic intermediate biosynthesis; chorismate biosynthesis; chorismate from D-erythrose 4-phosphate and phosphoenolpyruvate: step 6/7. Catalyzes the transfer of the enolpyruvyl moiety of phosphoenolpyruvate (PEP) to the 5-hydroxyl of shikimate-3-phosphate (S3P) to produce enolpyruvyl shikimate-3-phosphate and inorganic phosphate. This Campylobacter jejuni (strain RM1221) protein is 3-phosphoshikimate 1-carboxyvinyltransferase.